Here is a 942-residue protein sequence, read N- to C-terminus: Exopolysaccharide phosphotransferase SCO2592 (942 aa).

It belongs to the stealth family.

This chain is Exopolysaccharide phosphotransferase SCO2592, found in Streptomyces coelicolor (strain ATCC BAA-471 / A3(2) / M145).